A 347-amino-acid polypeptide reads, in one-letter code: MNPIVFSTILTTAIMGTMIVMTSSHWLMIWIGFEMNLLAIIPILMKKFNPRAMEAATKYFLTQATASMLLMMAIIINLMFSSQWTITKIFNPTASIIMTSALIMKLGLSPFHFWVPEVTQGIPLVSGLILLTWQKLAPMSVLYQIAPSINLDMLMTSALLSILVGGWGGLNQTQLRKIMAYSSIAHMGWMTAILTYNPTMTALNMLIYIMMTLTTFMLFMLNSSTTTLSLSHTWNKTPLITSLILITMLSLGGLPPLSGFIPKWMIIQELTKNDSIILPTSMAIMALLNLYFYMRLTYSTSLTMFPSTNNMKMKWQFENPKRMNFLPTLIIMSTLLLPLTPIMSTLN.

11 consecutive transmembrane segments (helical) span residues 1-21 (MNPI…MIVM), 25-45 (HWLM…PILM), 60-80 (FLTQ…NLMF), 89-109 (IFNP…LGLS), 111-131 (FHFW…LILL), 149-169 (INLD…GWGG), 178-198 (IMAY…TYNP), 201-221 (TALN…LFML), 242-262 (SLIL…GFIP), 274-294 (DSII…YFYM), and 323-343 (MNFL…TPIM).

The protein belongs to the complex I subunit 2 family. As to quaternary structure, core subunit of respiratory chain NADH dehydrogenase (Complex I) which is composed of 45 different subunits. Interacts with TMEM242.

The protein resides in the mitochondrion inner membrane. The enzyme catalyses a ubiquinone + NADH + 5 H(+)(in) = a ubiquinol + NAD(+) + 4 H(+)(out). Core subunit of the mitochondrial membrane respiratory chain NADH dehydrogenase (Complex I) which catalyzes electron transfer from NADH through the respiratory chain, using ubiquinone as an electron acceptor. Essential for the catalytic activity and assembly of complex I. This Ceratotherium simum (White rhinoceros) protein is NADH-ubiquinone oxidoreductase chain 2.